A 69-amino-acid chain; its full sequence is Cold shock-like protein CspE (69 aa).

The region spanning 6–66 (GNVKWFNESK…GAKGPSAANV (61 aa)) is the CSD domain.

It is found in the cytoplasm. In Escherichia coli O6:H1 (strain CFT073 / ATCC 700928 / UPEC), this protein is Cold shock-like protein CspE (cspE).